Consider the following 253-residue polypeptide: 5-oxoprolinase subunit A (253 aa).

This sequence belongs to the LamB/PxpA family. Forms a complex composed of PxpA, PxpB and PxpC.

The catalysed reaction is 5-oxo-L-proline + ATP + 2 H2O = L-glutamate + ADP + phosphate + H(+). In terms of biological role, catalyzes the cleavage of 5-oxoproline to form L-glutamate coupled to the hydrolysis of ATP to ADP and inorganic phosphate. This is 5-oxoprolinase subunit A from Bacillus thuringiensis subsp. konkukian (strain 97-27).